The following is a 202-amino-acid chain: NNYCKIKCRSGIHTLCKFGISTKPNCGKNVVKASGLTKAEKLEILKQHNEFRQKVARGLETRGKPGPQPPAKSMNTLVWNDELAQIAQVWAGQCDYGHDVCRNTAKYSVGQNIAENGSTAASFASVSNMVQMWADEVKNYQYGSTKNKLIEVGHYTQMVWAKTKEIGCGSIKYIENGWHRHYLVCNYGPAGNIGNEPIYERK.

4 disulfide bridges follow: Cys-4/Cys-16, Cys-8/Cys-101, Cys-26/Cys-94, and Cys-168/Cys-185. The 142-residue stretch at 46-187 (KQHNEFRQKV…WHRHYLVCNY (142 aa)) folds into the SCP domain.

This sequence belongs to the CRISP family. Venom allergen 5-like subfamily. Expressed by the venom gland.

It is found in the secreted. This is Venom allergen 5 from Vespa mandarinia (Asian giant hornet).